The chain runs to 381 residues: L-lactate dehydrogenase (381 aa).

Residues 1–380 (MIISSASDYR…KPEALVDLSK (380 aa)) form the FMN hydroxy acid dehydrogenase domain. Tyr24 lines the substrate pocket. FMN contacts are provided by Ser106 and Gln127. Tyr129 lines the substrate pocket. Position 155 (Thr155) interacts with FMN. Arg164 contacts substrate. Residue Lys251 participates in FMN binding. His275 (proton acceptor) is an active-site residue. Arg278 lines the substrate pocket. Residue 306-330 (DSGIRNGLDIVRMLALGADATMLGR) participates in FMN binding.

Belongs to the FMN-dependent alpha-hydroxy acid dehydrogenase family. FMN serves as cofactor.

The protein resides in the cell inner membrane. It catalyses the reaction (S)-lactate + A = pyruvate + AH2. In terms of biological role, catalyzes the conversion of L-lactate to pyruvate. Is coupled to the respiratory chain. This Haemophilus influenzae (strain 86-028NP) protein is L-lactate dehydrogenase.